Consider the following 91-residue polypeptide: Small ribosomal subunit protein uS19c (91 aa).

The protein belongs to the universal ribosomal protein uS19 family.

It localises to the plastid. Its subcellular location is the organellar chromatophore. Its function is as follows. Protein S19 forms a complex with S13 that binds strongly to the 16S ribosomal RNA. The protein is Small ribosomal subunit protein uS19c of Paulinella chromatophora.